The chain runs to 386 residues: Phosphate acyltransferase (386 aa).

Residues 359–386 (PHRARQDELGENKVVGADQSMTAKATGT) are disordered. Residues 377 to 386 (QSMTAKATGT) show a composition bias toward polar residues.

Belongs to the PlsX family. As to quaternary structure, homodimer. Probably interacts with PlsY.

The protein localises to the cytoplasm. It catalyses the reaction a fatty acyl-[ACP] + phosphate = an acyl phosphate + holo-[ACP]. The protein operates within lipid metabolism; phospholipid metabolism. In terms of biological role, catalyzes the reversible formation of acyl-phosphate (acyl-PO(4)) from acyl-[acyl-carrier-protein] (acyl-ACP). This enzyme utilizes acyl-ACP as fatty acyl donor, but not acyl-CoA. The protein is Phosphate acyltransferase of Beijerinckia indica subsp. indica (strain ATCC 9039 / DSM 1715 / NCIMB 8712).